We begin with the raw amino-acid sequence, 145 residues long: Ribonuclease H (145 aa).

One can recognise an RNase H type-1 domain in the interval 1–141 (MQEVIIYSDG…ADALANRGVA (141 aa)). Mg(2+)-binding residues include aspartate 9, glutamate 47, aspartate 69, and aspartate 133.

Belongs to the RNase H family. In terms of assembly, monomer. It depends on Mg(2+) as a cofactor.

The protein resides in the cytoplasm. The catalysed reaction is Endonucleolytic cleavage to 5'-phosphomonoester.. Functionally, endonuclease that specifically degrades the RNA of RNA-DNA hybrids. The chain is Ribonuclease H from Cupriavidus pinatubonensis (strain JMP 134 / LMG 1197) (Cupriavidus necator (strain JMP 134)).